A 116-amino-acid polypeptide reads, in one-letter code: Large ribosomal subunit protein bL17 (116 aa).

The protein belongs to the bacterial ribosomal protein bL17 family. In terms of assembly, part of the 50S ribosomal subunit. Contacts protein L32.

The polypeptide is Large ribosomal subunit protein bL17 (Acaryochloris marina (strain MBIC 11017)).